A 102-amino-acid chain; its full sequence is uncharacterized protein (102 aa).

[3Fe-4S] cluster-binding residues include cysteine 10, cysteine 16, and cysteine 55. The disordered stretch occupies residues 66-102; that stretch reads DAGDDERASADPARSPAEAERHAAKDQRIPGGHDGTV. The segment covering 82–93 has biased composition (basic and acidic residues); that stretch reads AEAERHAAKDQR.

The cofactor is [3Fe-4S] cluster.

Functionally, electron transport protein for the cytochrome systems. This is an uncharacterized protein from Sinorhizobium fredii (strain NBRC 101917 / NGR234).